Consider the following 157-residue polypeptide: uncharacterized protein (157 aa).

Residues 1–26 (MEALRRAHEVALRLLLCRPWASRAAA) form the signal peptide.

Its subcellular location is the secreted. This is an uncharacterized protein from Homo sapiens (Human).